The primary structure comprises 290 residues: UDP-N-acetylenolpyruvoylglucosamine reductase (290 aa).

An FAD-binding PCMH-type domain is found at 20-187; it reads GVGGESEMWF…SRVRLKLRPS (168 aa). Arginine 167 is a catalytic residue.

The protein belongs to the MurB family. It depends on FAD as a cofactor.

It is found in the cytoplasm. It carries out the reaction UDP-N-acetyl-alpha-D-muramate + NADP(+) = UDP-N-acetyl-3-O-(1-carboxyvinyl)-alpha-D-glucosamine + NADPH + H(+). The protein operates within cell wall biogenesis; peptidoglycan biosynthesis. In terms of biological role, cell wall formation. This Deinococcus radiodurans (strain ATCC 13939 / DSM 20539 / JCM 16871 / CCUG 27074 / LMG 4051 / NBRC 15346 / NCIMB 9279 / VKM B-1422 / R1) protein is UDP-N-acetylenolpyruvoylglucosamine reductase.